We begin with the raw amino-acid sequence, 207 residues long: Inner membrane-spanning protein YciB (207 aa).

6 helical membrane-spanning segments follow: residues 3–23 (FLFDLLPIVLFFVAFKVAEGQ), 51–71 (VLLATLVVIVATFAQIGWLLL), 78–98 (TMLWVSLGLVTVLGGATVWFH), 105–125 (WKPSVLYWVMGTAFWLSHAVF), 150–170 (FMWIAFFAFMGLANLYVAYSF), and 178–198 (FKLFGGVGLMLLFTLAQGLYL).

The protein belongs to the YciB family.

It is found in the cell inner membrane. Its function is as follows. Plays a role in cell envelope biogenesis, maintenance of cell envelope integrity and membrane homeostasis. In Methylibium petroleiphilum (strain ATCC BAA-1232 / LMG 22953 / PM1), this protein is Inner membrane-spanning protein YciB.